The chain runs to 425 residues: UPF0597 protein UNCMA_16400 (425 aa).

It belongs to the UPF0597 family.

The chain is UPF0597 protein UNCMA_16400 from Methanocella arvoryzae (strain DSM 22066 / NBRC 105507 / MRE50).